The chain runs to 260 residues: 3'-5' ssDNA/RNA exonuclease TatD (260 aa).

A divalent metal cation is bound by residues E92, H128, and H153.

This sequence belongs to the metallo-dependent hydrolases superfamily. TatD-type hydrolase family. TatD subfamily. As to quaternary structure, monomer. Mg(2+) serves as cofactor.

The protein localises to the cytoplasm. Functionally, 3'-5' exonuclease that prefers single-stranded DNA and RNA. May play a role in the H(2)O(2)-induced DNA damage repair. In Pectobacterium parmentieri (strain WPP163) (Pectobacterium wasabiae (strain WPP163)), this protein is 3'-5' ssDNA/RNA exonuclease TatD.